A 569-amino-acid polypeptide reads, in one-letter code: AsmA family protein YicH (569 aa).

Residues 1–6 (MKFIGK) are Cytoplasmic-facing. The chain crosses the membrane as a helical span at residues 7–27 (LLLYILIALLVAIAGLYFLLQ). At 28–569 (TRWGAEHISA…GEVTSTEPVR (542 aa)) the chain is on the periplasmic side.

This sequence belongs to the AsmA family.

It is found in the cell inner membrane. The polypeptide is AsmA family protein YicH (yicH) (Escherichia coli (strain K12)).